The following is a 1093-amino-acid chain: Mediator of RNA polymerase II transcription subunit 14 (1093 aa).

Disordered regions lie at residues 1-61 and 1035-1060; these read MPGV…KIDG and TKSD…SQAA. A compositionally biased stretch (polar residues) spans 19-31; that stretch reads DTQTPSNGDNLRN. Residues 41-61 are compositionally biased toward basic and acidic residues; the sequence is KGDKDHDPDKESYTGKPKIDG. Polar residues predominate over residues 1040–1056; that stretch reads DYSTQPVPEKQSQTGAP.

It belongs to the Mediator complex subunit 14 family. As to quaternary structure, component of the Mediator complex.

The protein localises to the nucleus. Component of the Mediator complex, a coactivator involved in the regulated transcription of nearly all RNA polymerase II-dependent genes. Mediator functions as a bridge to convey information from gene-specific regulatory proteins to the basal RNA polymerase II transcription machinery. Mediator is recruited to promoters by direct interactions with regulatory proteins and serves as a scaffold for the assembly of a functional preinitiation complex with RNA polymerase II and the general transcription factors. In Neosartorya fischeri (strain ATCC 1020 / DSM 3700 / CBS 544.65 / FGSC A1164 / JCM 1740 / NRRL 181 / WB 181) (Aspergillus fischerianus), this protein is Mediator of RNA polymerase II transcription subunit 14 (rgr1).